We begin with the raw amino-acid sequence, 704 residues long: Phosphoribosylformylglycinamidine synthase subunit PurL (704 aa).

Residue His-32 is part of the active site. Residue Tyr-35 coordinates ATP. Glu-76 contacts Mg(2+). Substrate contacts are provided by residues 77 to 80 and Arg-99; that span reads SHNH. Catalysis depends on His-78, which acts as the Proton acceptor. Asp-100 contacts Mg(2+). Gln-224 is a substrate binding site. Residue Asp-252 coordinates Mg(2+). 296–298 provides a ligand contact to substrate; the sequence is ESQ. Residues Asp-471 and Gly-508 each contribute to the ATP site. Asn-509 is a binding site for Mg(2+). Ser-511 is a substrate binding site.

This sequence belongs to the FGAMS family. Monomer. Part of the FGAM synthase complex composed of 1 PurL, 1 PurQ and 2 PurS subunits.

The protein localises to the cytoplasm. The catalysed reaction is N(2)-formyl-N(1)-(5-phospho-beta-D-ribosyl)glycinamide + L-glutamine + ATP + H2O = 2-formamido-N(1)-(5-O-phospho-beta-D-ribosyl)acetamidine + L-glutamate + ADP + phosphate + H(+). The protein operates within purine metabolism; IMP biosynthesis via de novo pathway; 5-amino-1-(5-phospho-D-ribosyl)imidazole from N(2)-formyl-N(1)-(5-phospho-D-ribosyl)glycinamide: step 1/2. Functionally, part of the phosphoribosylformylglycinamidine synthase complex involved in the purines biosynthetic pathway. Catalyzes the ATP-dependent conversion of formylglycinamide ribonucleotide (FGAR) and glutamine to yield formylglycinamidine ribonucleotide (FGAM) and glutamate. The FGAM synthase complex is composed of three subunits. PurQ produces an ammonia molecule by converting glutamine to glutamate. PurL transfers the ammonia molecule to FGAR to form FGAM in an ATP-dependent manner. PurS interacts with PurQ and PurL and is thought to assist in the transfer of the ammonia molecule from PurQ to PurL. The polypeptide is Phosphoribosylformylglycinamidine synthase subunit PurL (Pyrococcus furiosus (strain ATCC 43587 / DSM 3638 / JCM 8422 / Vc1)).